The chain runs to 449 residues: Acetolactate synthase small subunit 1, chloroplastic (449 aa).

The transit peptide at 1–30 (MEHIQTRTTLSQLSTLPSDKRLGAIRFKCL) directs the protein to the chloroplast. 2 consecutive ACT domains span residues 31–98 (LVMK…DLSK) and 259–333 (TLSM…DITH).

The protein belongs to the acetolactate synthase small subunit family. As to quaternary structure, the acetolactate synthase complex contains both large catalytic subunits and small regulatory subunits.

The protein localises to the plastid. It localises to the chloroplast. The protein operates within amino-acid biosynthesis; L-isoleucine biosynthesis; L-isoleucine from 2-oxobutanoate: step 1/4. It functions in the pathway amino-acid biosynthesis; L-valine biosynthesis; L-valine from pyruvate: step 1/4. In terms of biological role, regulatory subunit of acetohydroxy-acid synthase. Probably involved in feedback inhibition by branched-chain amino acids. Not involved in herbicide tolerance. The sequence is that of Acetolactate synthase small subunit 1, chloroplastic from Nicotiana plumbaginifolia (Leadwort-leaved tobacco).